The primary structure comprises 933 residues: Protein translocase subunit SecA (933 aa).

Residues Q90, 108–112 (GEGKT), and D504 each bind ATP. The disordered stretch occupies residues 539 to 570 (GMGSNNRRPQGFGQDSKKKKWQPSADIFPTDL).

This sequence belongs to the SecA family. Monomer and homodimer. Part of the essential Sec protein translocation apparatus which comprises SecA, SecYEG and auxiliary proteins SecDF. Other proteins may also be involved.

The protein resides in the cell inner membrane. Its subcellular location is the cellular thylakoid membrane. The protein localises to the cytoplasm. The catalysed reaction is ATP + H2O + cellular proteinSide 1 = ADP + phosphate + cellular proteinSide 2.. In terms of biological role, part of the Sec protein translocase complex. Interacts with the SecYEG preprotein conducting channel. Has a central role in coupling the hydrolysis of ATP to the transfer of proteins into and across the cell membrane, serving as an ATP-driven molecular motor driving the stepwise translocation of polypeptide chains across the membrane. Its function is as follows. Probably participates in protein translocation into and across both the cytoplasmic and thylakoid membranes in cyanobacterial cells. This chain is Protein translocase subunit SecA, found in Crocosphaera subtropica (strain ATCC 51142 / BH68) (Cyanothece sp. (strain ATCC 51142)).